Consider the following 207-residue polypeptide: Large ribosomal subunit protein uL4 (207 aa).

Positions 44 to 78 are disordered; that stretch reads QRQGTHDVKNRSEVRGGGRKPWRQKGTGRARQGSI. Residues 47 to 59 are compositionally biased toward basic and acidic residues; sequence GTHDVKNRSEVRG. Residues 60 to 71 are compositionally biased toward basic residues; it reads GGRKPWRQKGTG.

The protein belongs to the universal ribosomal protein uL4 family. In terms of assembly, part of the 50S ribosomal subunit.

In terms of biological role, one of the primary rRNA binding proteins, this protein initially binds near the 5'-end of the 23S rRNA. It is important during the early stages of 50S assembly. It makes multiple contacts with different domains of the 23S rRNA in the assembled 50S subunit and ribosome. Its function is as follows. Forms part of the polypeptide exit tunnel. In Brevibacillus brevis (strain 47 / JCM 6285 / NBRC 100599), this protein is Large ribosomal subunit protein uL4.